The sequence spans 391 residues: F-box/kelch-repeat protein At3g16740 (391 aa).

An F-box domain is found at 1–47 (MVQISDLPRDLTEEVLSRIPVTSMRAVRFTCKKWNTLSKDRSFTKKH). 2 Kelch repeats span residues 104 to 154 (KIFH…YEEK) and 163 to 215 (ILRF…LKGN).

In terms of assembly, part of a SCF (ASK-cullin-F-box) protein ligase complex. Interacts with ASK11.

Its subcellular location is the nucleus. It functions in the pathway protein modification; protein ubiquitination. Functionally, component of SCF(ASK-cullin-F-box) E3 ubiquitin ligase complexes, which may mediate the ubiquitination and subsequent proteasomal degradation of target proteins. The chain is F-box/kelch-repeat protein At3g16740 from Arabidopsis thaliana (Mouse-ear cress).